Reading from the N-terminus, the 322-residue chain is NADH-quinone oxidoreductase subunit H (322 aa).

9 consecutive transmembrane segments (helical) span residues 15–35 (FFKV…LSIV), 50–69 (NRVG…KILF), 81–101 (FIFV…IPII), 114–134 (IGIL…LFAG), 149–169 (ACVQ…GVVA), 186–206 (IWNV…GLAV), 237–257 (FFIG…TLFF), 265–285 (IPGC…FILI), and 302–322 (WKFC…LILV).

This sequence belongs to the complex I subunit 1 family. In terms of assembly, NDH-1 is composed of 13 different subunits. Subunits NuoA, H, J, K, L, M, N constitute the membrane sector of the complex.

It localises to the cell membrane. The catalysed reaction is a quinone + NADH + 5 H(+)(in) = a quinol + NAD(+) + 4 H(+)(out). Functionally, NDH-1 shuttles electrons from NADH, via FMN and iron-sulfur (Fe-S) centers, to quinones in the respiratory chain. The immediate electron acceptor for the enzyme in this species is believed to be ubiquinone. Couples the redox reaction to proton translocation (for every two electrons transferred, four hydrogen ions are translocated across the cytoplasmic membrane), and thus conserves the redox energy in a proton gradient. This subunit may bind ubiquinone. The sequence is that of NADH-quinone oxidoreductase subunit H from Buchnera aphidicola subsp. Acyrthosiphon pisum (strain 5A).